The primary structure comprises 458 residues: DNA repair protein RadA (458 aa).

The C4-type zinc-finger motif lies at 10–27 (CQSCGYESPKWMGKCPGC). Position 98-105 (98-105 (GDPGIGKS)) interacts with ATP. Residues 255–259 (KNRFG) carry the RadA KNRFG motif motif. The segment at 354-458 (DAYLKVAGGV…AEALRTSLGG (105 aa)) is lon-protease-like.

The protein belongs to the RecA family. RadA subfamily. Interacts with DisA.

DNA-dependent ATPase involved in processing of recombination intermediates, plays a role in repairing DNA breaks. Stimulates the branch migration of RecA-mediated strand transfer reactions, allowing the 3' invading strand to extend heteroduplex DNA faster. Binds ssDNA in the presence of ADP but not other nucleotides, has ATPase activity that is stimulated by ssDNA and various branched DNA structures, but inhibited by SSB. Does not have RecA's homology-searching function. Its function is as follows. Plays a role in DNA repair. Might stabilize or process Holliday junction intermediates. May work with DisA following methyl methanesulfonate (MMS) but not H(2)O(2) damage; DisA is a DNA integrity scanning protein with c-di-AMP synthase activity. The sequence is that of DNA repair protein RadA from Bacillus subtilis (strain 168).